The chain runs to 432 residues: FAD-dependent monooxygenase pynG (432 aa).

Residues E32, R103, D315, and A328 each coordinate FAD.

It belongs to the paxM FAD-dependent monooxygenase family. FAD is required as a cofactor.

Its pathway is secondary metabolite biosynthesis. In terms of biological role, FAD-dependent monooxygenase; part of the gene cluster that mediates the biosynthesis of pyranonigrins, a family of antioxidative compounds. The first step of pyranonigrins biosynthesis is performed by the hybrid PKS-NRPS synthetase that condenses 6 malonyl-CoA units to an acetyl starter unit, to form a 1,3,5-trioxotetradecane-6,8-dienyl-ACP. The enoyl reductase (ER) domain of pynA is likely to be functional during the first two rounds of polyketide chain extension, to generate the saturated C-C bonds of the alkyl side chain. PynA subsequently forms the amide bond between the acyl chain and L-serine. Although pynA has a terminal reductase domain, it appears to require the thioesterase pynI for the release of the straight-chain intermediate from pynA via the formation of a tetramic acid pyranonigrin J. The methyltransferase pynC then coverts pyranonigrin J to pyranonigrin I via N-methylation. The FAD-dependent monooxygenase pynG catalyzes an epoxidation-mediated cyclization to form the dihydro-gamma-pyrone moiety, followed by pynD-catalyzed oxidation of the alcohol to the ketone and enolization to yield the characteristic tetramic acid-fused gamma-pyrone core of pyranonigrin H. Pyranonigrin H is substrate of pynH for dehydration-mediated exo-methylene formation from the serine side chain to produce pyranonigrin E, before the oxidase pynE reduces the exo-methylene of pyranonigrin E into a pendant methyl to form pyranonigrin G. The FAD-linked oxidoreductase pynB performs the reverse reaction and converts pyranonigrin G back to pyranonigrin E. This is FAD-dependent monooxygenase pynG from Aspergillus niger (strain ATCC MYA-4892 / CBS 513.88 / FGSC A1513).